The sequence spans 312 residues: Glyoxylate/hydroxypyruvate reductase A (312 aa).

The active site involves arginine 227. Histidine 275 acts as the Proton donor in catalysis.

Belongs to the D-isomer specific 2-hydroxyacid dehydrogenase family. GhrA subfamily.

Its subcellular location is the cytoplasm. The catalysed reaction is glycolate + NADP(+) = glyoxylate + NADPH + H(+). The enzyme catalyses (R)-glycerate + NAD(+) = 3-hydroxypyruvate + NADH + H(+). It catalyses the reaction (R)-glycerate + NADP(+) = 3-hydroxypyruvate + NADPH + H(+). Its function is as follows. Catalyzes the NADPH-dependent reduction of glyoxylate and hydroxypyruvate into glycolate and glycerate, respectively. In Escherichia fergusonii (strain ATCC 35469 / DSM 13698 / CCUG 18766 / IAM 14443 / JCM 21226 / LMG 7866 / NBRC 102419 / NCTC 12128 / CDC 0568-73), this protein is Glyoxylate/hydroxypyruvate reductase A.